Here is a 189-residue protein sequence, read N- to C-terminus: Calcium and integrin-binding family member 2 (189 aa).

3 consecutive EF-hand domains span residues 68 to 103 (RENP…FSEQ), 105 to 140 (PRDI…MTKN), and 146 to 181 (EHQQ…APDF). 9 residues coordinate Ca(2+): aspartate 118, aspartate 120, aspartate 122, aspartate 129, aspartate 159, aspartate 161, aspartate 163, lysine 165, and glutamate 170.

Monomer. Homodimer.

It localises to the cytoplasm. In terms of biological role, calcium- and integrin-binding protein. Plays a role in intracellular calcium homeostasis. Critical for proper photoreceptor cell maintenance and function. Required for prevention of light-dependent retinal degeneration. The chain is Calcium and integrin-binding family member 2 from Drosophila melanogaster (Fruit fly).